A 675-amino-acid polypeptide reads, in one-letter code: Polyphosphate kinase (675 aa).

Asparagine 42 is an ATP binding site. Residues arginine 372 and arginine 401 each contribute to the Mg(2+) site. Histidine 431 (phosphohistidine intermediate) is an active-site residue. ATP contacts are provided by tyrosine 464, arginine 558, and histidine 586.

The protein belongs to the polyphosphate kinase 1 (PPK1) family. Mg(2+) serves as cofactor. An intermediate of this reaction is the autophosphorylated ppk in which a phosphate is covalently linked to a histidine residue through a N-P bond.

It catalyses the reaction [phosphate](n) + ATP = [phosphate](n+1) + ADP. In terms of biological role, catalyzes the reversible transfer of the terminal phosphate of ATP to form a long-chain polyphosphate (polyP). This Helicobacter pylori (strain J99 / ATCC 700824) (Campylobacter pylori J99) protein is Polyphosphate kinase.